The primary structure comprises 505 residues: Histidine ammonia-lyase (505 aa).

A cross-link (5-imidazolinone (Ala-Gly)) is located at residues Ala141–Gly143. 2,3-didehydroalanine (Ser) is present on Ser142.

It belongs to the PAL/histidase family. Contains an active site 4-methylidene-imidazol-5-one (MIO), which is formed autocatalytically by cyclization and dehydration of residues Ala-Ser-Gly.

It localises to the cytoplasm. It carries out the reaction L-histidine = trans-urocanate + NH4(+). It participates in amino-acid degradation; L-histidine degradation into L-glutamate; N-formimidoyl-L-glutamate from L-histidine: step 1/3. The sequence is that of Histidine ammonia-lyase from Bacillus thuringiensis (strain Al Hakam).